A 135-amino-acid polypeptide reads, in one-letter code: Protein NrdI (135 aa).

This sequence belongs to the NrdI family.

Probably involved in ribonucleotide reductase function. This is Protein NrdI from Brucella abortus (strain S19).